A 208-amino-acid chain; its full sequence is dITP/XTP pyrophosphatase (208 aa).

7-12 is a binding site for substrate; it reads SNNAKK. 2 residues coordinate Mg(2+): glutamate 39 and aspartate 68. The active-site Proton acceptor is the aspartate 68. Residues serine 69, 162–165, lysine 185, and 190–191 contribute to the substrate site; these read FGYD and HR.

This sequence belongs to the HAM1 NTPase family. In terms of assembly, homodimer. Mg(2+) is required as a cofactor.

It catalyses the reaction XTP + H2O = XMP + diphosphate + H(+). The catalysed reaction is dITP + H2O = dIMP + diphosphate + H(+). It carries out the reaction ITP + H2O = IMP + diphosphate + H(+). Its function is as follows. Pyrophosphatase that catalyzes the hydrolysis of nucleoside triphosphates to their monophosphate derivatives, with a high preference for the non-canonical purine nucleotides XTP (xanthosine triphosphate), dITP (deoxyinosine triphosphate) and ITP. Seems to function as a house-cleaning enzyme that removes non-canonical purine nucleotides from the nucleotide pool, thus preventing their incorporation into DNA/RNA and avoiding chromosomal lesions. In Methylibium petroleiphilum (strain ATCC BAA-1232 / LMG 22953 / PM1), this protein is dITP/XTP pyrophosphatase.